Consider the following 307-residue polypeptide: Retron Ec86 putative ribosyltransferase/DNA-binding protein (307 aa).

In terms of biological role, possible ribosyltransferase/DNA-binding component of antiviral defense system retron Ec86, composed of a non-coding RNA (ncRNA), a ribosyltransferase/DNA-binding protein and a reverse transcriptase (RT). Expression of the 3-gene retron confers protection against bacteriophages T5. At multiplicity of infection (MOI) of 0.02 cultures grow normally when infected with T5 without collapsing, at MOI 2 cultures enter growth stasis. The sequence is that of Retron Ec86 putative ribosyltransferase/DNA-binding protein from Escherichia coli.